The chain runs to 295 residues: GTPase Era (295 aa).

The region spanning 4-171 is the Era-type G domain; sequence KSGFVTIIGR…IKQIVSFLPE (168 aa). A G1 region spans residues 12-19; that stretch reads GRPNVGKS. GTP is bound at residue 12–19; that stretch reads GRPNVGKS. Residues 38–42 form a G2 region; it reads QTTRN. The tract at residues 59–62 is G3; it reads DTPG. Residues 59–63 and 121–124 contribute to the GTP site; these read DTPGI and NKID. The tract at residues 121–124 is G4; sequence NKID. The G5 stretch occupies residues 150–152; the sequence is ISA. In terms of domain architecture, KH type-2 spans 202–280; that stretch reads LDQEIPHGIA…FLELWVKVNE (79 aa).

The protein belongs to the TRAFAC class TrmE-Era-EngA-EngB-Septin-like GTPase superfamily. Era GTPase family. Monomer.

The protein localises to the cytoplasm. The protein resides in the cell membrane. An essential GTPase that binds both GDP and GTP, with rapid nucleotide exchange. Plays a role in 16S rRNA processing and 30S ribosomal subunit biogenesis and possibly also in cell cycle regulation and energy metabolism. The protein is GTPase Era of Alkaliphilus metalliredigens (strain QYMF).